Consider the following 308-residue polypeptide: Ribonuclease Z (308 aa).

Zn(2+) contacts are provided by His-61, His-63, Asp-65, His-66, His-139, Asp-210, and His-268. Residue Asp-65 is the Proton acceptor of the active site.

This sequence belongs to the RNase Z family. As to quaternary structure, homodimer. Zn(2+) serves as cofactor.

It carries out the reaction Endonucleolytic cleavage of RNA, removing extra 3' nucleotides from tRNA precursor, generating 3' termini of tRNAs. A 3'-hydroxy group is left at the tRNA terminus and a 5'-phosphoryl group is left at the trailer molecule.. Functionally, zinc phosphodiesterase, which displays some tRNA 3'-processing endonuclease activity. Probably involved in tRNA maturation, by removing a 3'-trailer from precursor tRNA. The polypeptide is Ribonuclease Z (Halobacterium salinarum (strain ATCC 700922 / JCM 11081 / NRC-1) (Halobacterium halobium)).